Consider the following 500-residue polypeptide: Na(+)/H(+) antiporter NhaB (500 aa).

The next 12 membrane-spanning stretches (helical) occupy residues 28 to 50 (FLLSNPLLLWLAGPTVAAWVLVG), 68 to 88 (GGLLVLEALLLGLASPEALYA), 98 to 118 (LLLMFMVAGIYFMKDLLLLLF), 121 to 141 (LLLGVRSKTLLSLLFCLLAAL), 145 to 165 (FLDALTVTAVVISVAVAFFAV), 205 to 225 (LLMHAAVGTALGGVCTLVGEP), 244 to 264 (QVAPVSMPVLAAGLLTCVALE), 301 to 318 (ALLVQALAALVLMIGLAL), 350 to 370 (FQEALPFTALLVAFFAVVAVI), 394 to 414 (MLFIANGLLSAISDNVFVATI), 449 to 469 (VATPNGQAAFLFLLTSSIAPL), and 477 to 497 (MVWMALPYTLVMGGLGWWAVS).

Belongs to the NhaB Na(+)/H(+) (TC 2.A.34) antiporter family.

Its subcellular location is the cell inner membrane. It catalyses the reaction 2 Na(+)(in) + 3 H(+)(out) = 2 Na(+)(out) + 3 H(+)(in). Functionally, na(+)/H(+) antiporter that extrudes sodium in exchange for external protons. The protein is Na(+)/H(+) antiporter NhaB of Pseudomonas paraeruginosa (strain DSM 24068 / PA7) (Pseudomonas aeruginosa (strain PA7)).